We begin with the raw amino-acid sequence, 107 residues long: Iron-sulfur cluster assembly protein CyaY (107 aa).

This sequence belongs to the frataxin family.

Functionally, involved in iron-sulfur (Fe-S) cluster assembly. May act as a regulator of Fe-S biogenesis. The chain is Iron-sulfur cluster assembly protein CyaY from Neisseria meningitidis serogroup C / serotype 2a (strain ATCC 700532 / DSM 15464 / FAM18).